The following is a 200-amino-acid chain: dITP/XTP pyrophosphatase (200 aa).

Residue 8–13 (TGNQGK) coordinates substrate. Aspartate 69 serves as the catalytic Proton acceptor. Mg(2+) is bound at residue aspartate 69. Residues serine 70, 154 to 157 (FGYD), lysine 177, and 182 to 183 (HR) each bind substrate.

This sequence belongs to the HAM1 NTPase family. In terms of assembly, homodimer. It depends on Mg(2+) as a cofactor.

It carries out the reaction XTP + H2O = XMP + diphosphate + H(+). It catalyses the reaction dITP + H2O = dIMP + diphosphate + H(+). The enzyme catalyses ITP + H2O = IMP + diphosphate + H(+). Functionally, pyrophosphatase that catalyzes the hydrolysis of nucleoside triphosphates to their monophosphate derivatives, with a high preference for the non-canonical purine nucleotides XTP (xanthosine triphosphate), dITP (deoxyinosine triphosphate) and ITP. Seems to function as a house-cleaning enzyme that removes non-canonical purine nucleotides from the nucleotide pool, thus preventing their incorporation into DNA/RNA and avoiding chromosomal lesions. This Vibrio vulnificus (strain CMCP6) protein is dITP/XTP pyrophosphatase.